Consider the following 191-residue polypeptide: Cathelicidin-related peptide Oh-Cath (191 aa).

The N-terminal stretch at Met1 to Ser22 is a signal peptide. The propeptide occupies Leu23 to Lys161. 2 disulfides stabilise this stretch: Cys81/Cys92 and Cys103/Cys120. Residues Glu125–Lys151 show a composition bias toward acidic residues. Residues Glu125–Pro154 form a disordered region.

This sequence belongs to the cathelicidin family. In terms of tissue distribution, expressed by the venom gland.

Its subcellular location is the secreted. It is found in the target cell membrane. Functionally, potent antimicrobial peptide against Gram-negative (MIC=0.25 ug/ml against E.coli ATCC 25922, MIC=0.5 ug/ml against P.aeruginosa) and Gram-positive bacteria (MIC=64 ug/ml against E.faecalis, MIC=64 ug/ml against S.aureus). Adopts an amphipathic alpha helical conformation, that may allow to partition into the target membrane. Low hemolytic activities have been observed on mammalian cells. The sequence is that of Cathelicidin-related peptide Oh-Cath from Ophiophagus hannah (King cobra).